A 139-amino-acid chain; its full sequence is Invertebrate-type lysozyme 2 (139 aa).

The N-terminal stretch at 1-18 (MFVKAILLLSIAVAYASA) is a signal peptide. An I-type lysozyme domain is found at 19 to 138 (DCLHCICMRE…WKGVHSCCGC (120 aa)). Disulfide bonds link Cys-20–Cys-106, Cys-23–Cys-138, Cys-25–Cys-31, Cys-36–Cys-45, Cys-58–Cys-86, Cys-76–Cys-82, and Cys-98–Cys-120. The active-site Proton donor is Glu-28. Catalysis depends on Asp-39, which acts as the Nucleophile. 51–57 (KIPYYED) is a substrate binding site. Substrate-binding positions include Tyr-90 and 113 to 115 (HNG).

The protein belongs to the glycosyl hydrolase 22 family. Type-I lysozyme subfamily. In terms of tissue distribution, expressed in pharyngeal muscle cell pm3, nerve ring and intestine.

The enzyme catalyses Hydrolysis of (1-&gt;4)-beta-linkages between N-acetylmuramic acid and N-acetyl-D-glucosamine residues in a peptidoglycan and between N-acetyl-D-glucosamine residues in chitodextrins.. In terms of biological role, has bacteriolytic activity against Gram-positive bacteria. May play a role in resistance to Gram-positive bacterium S.aureus infection. The polypeptide is Invertebrate-type lysozyme 2 (Caenorhabditis elegans).